Reading from the N-terminus, the 776-residue chain is Photosystem I P700 chlorophyll a apoprotein A1 (776 aa).

Transmembrane regions (helical) follow at residues 76–99, 162–185, 201–225, 309–327, 368–391, 407–433, 455–477, and 557–575; these read IFSAHFGHLAIVFIWLSGAFFHGA, LMALATGALIMAGLVLHGGIFHYH, LQHHQIGLFGLGSLGWTGHLIHVAN, VAHHHLAWAVFLMFGGHVY, WHAQLAVNLACIGSGSIVVAHHMY, LGLFTHHMWIGGLMICGAAAHAGIAVI, AIISHLNWVCMFLGFHSFGLYIH, and LMIHHIHAFTIHVTCLILL. Positions 599 and 608 each coordinate [4Fe-4S] cluster. 2 helical membrane passes run 615 to 636 and 690 to 712; these read HVFLGLFWMYNSLSMVIFYFSW and LSGYGLLFLGGHFVWAFSLMFLF. Histidine 701 contacts divinylchlorophyll a'. The divinyl chlorophyll a site is built by methionine 709 and tyrosine 717. Tryptophan 718 lines the phylloquinone pocket. The chain crosses the membrane as a helical span at residues 750–770; it reads AVGVTHFLFGGIVTTWAFFHA.

This sequence belongs to the PsaA/PsaB family. As to quaternary structure, the PsaA/B heterodimer binds the P700 divinyl chlorophyll special pair and subsequent electron acceptors. PSI consists of a core antenna complex that captures photons, and an electron transfer chain that converts photonic excitation into a charge separation. The cyanobacterial PSI reaction center is composed of one copy each of PsaA,B,C,D,E,F,I,J,K,L,M and X, and forms trimeric complexes. PSI electron transfer chain: 5 divinyl chlorophyll a, 1 divinyl chlorophyll a', 2 phylloquinones and 3 4Fe-4S clusters. PSI core antenna: 90 divinyl chlorophyll a, 22 carotenoids, 3 phospholipids and 1 galactolipid. P700 is a divinyl chlorophyll a/divinyl chlorophyll a' dimer, A0 is one or more divinyl chlorophyll a, A1 is one or both phylloquinones and FX is a shared 4Fe-4S iron-sulfur center. is required as a cofactor.

It is found in the cellular thylakoid membrane. It carries out the reaction reduced [plastocyanin] + hnu + oxidized [2Fe-2S]-[ferredoxin] = oxidized [plastocyanin] + reduced [2Fe-2S]-[ferredoxin]. PsaA and PsaB bind P700, the primary electron donor of photosystem I (PSI), as well as the electron acceptors A0, A1 and FX. PSI is a plastocyanin/cytochrome c6-ferredoxin oxidoreductase, converting photonic excitation into a charge separation, which transfers an electron from the donor P700 chlorophyll pair to the spectroscopically characterized acceptors A0, A1, FX, FA and FB in turn. Oxidized P700 is reduced on the lumenal side of the thylakoid membrane by plastocyanin or cytochrome c6. The protein is Photosystem I P700 chlorophyll a apoprotein A1 of Prochlorococcus marinus (strain MIT 9303).